The following is a 241-amino-acid chain: MATNAKPVYQRILLKLSGEALQGTEGFGIDASILDRMAQEVKELVELGIQVGVVIGGGNLFRGAGLAKAGMNRVVGDHMGMLATVMNGLAMRDALHRAYVNARLMSAIPLNGVCDNYSWAEAISLLRNNRVVIFSAGTGNPFFTTDSAACLRGIEIEADVVLKATKVDGVYSADPVQDPSATMYETLTYQDVLERELKVMDLAAFTLARDHNLPIRVFNMNKPGALRRVVMGEKEGTLISQ.

15-18 (KLSG) is an ATP binding site. The interval 23 to 28 (GTEGFG) is involved in allosteric activation by GTP. Gly-57 provides a ligand contact to UMP. ATP-binding residues include Gly-58 and Arg-62. Residues Asp-77 and 138-145 (TGNPFFTT) each bind UMP. ATP is bound by residues Thr-165, Tyr-171, and Asp-174.

This sequence belongs to the UMP kinase family. As to quaternary structure, homohexamer.

It localises to the cytoplasm. The catalysed reaction is UMP + ATP = UDP + ADP. The protein operates within pyrimidine metabolism; CTP biosynthesis via de novo pathway; UDP from UMP (UMPK route): step 1/1. Allosterically activated by GTP. Inhibited by UTP. Its function is as follows. Catalyzes the reversible phosphorylation of UMP to UDP. This Pectobacterium atrosepticum (strain SCRI 1043 / ATCC BAA-672) (Erwinia carotovora subsp. atroseptica) protein is Uridylate kinase.